The primary structure comprises 245 residues: 1-(5-phosphoribosyl)-5-[(5-phosphoribosylamino)methylideneamino] imidazole-4-carboxamide isomerase (245 aa).

The active-site Proton acceptor is Asp7. Catalysis depends on Asp129, which acts as the Proton donor.

The protein belongs to the HisA/HisF family.

The protein resides in the cytoplasm. It catalyses the reaction 1-(5-phospho-beta-D-ribosyl)-5-[(5-phospho-beta-D-ribosylamino)methylideneamino]imidazole-4-carboxamide = 5-[(5-phospho-1-deoxy-D-ribulos-1-ylimino)methylamino]-1-(5-phospho-beta-D-ribosyl)imidazole-4-carboxamide. It functions in the pathway amino-acid biosynthesis; L-histidine biosynthesis; L-histidine from 5-phospho-alpha-D-ribose 1-diphosphate: step 4/9. This is 1-(5-phosphoribosyl)-5-[(5-phosphoribosylamino)methylideneamino] imidazole-4-carboxamide isomerase from Escherichia coli O81 (strain ED1a).